A 201-amino-acid chain; its full sequence is Probable nicotinate-nucleotide adenylyltransferase (201 aa).

This sequence belongs to the NadD family.

It catalyses the reaction nicotinate beta-D-ribonucleotide + ATP + H(+) = deamido-NAD(+) + diphosphate. It participates in cofactor biosynthesis; NAD(+) biosynthesis; deamido-NAD(+) from nicotinate D-ribonucleotide: step 1/1. Catalyzes the reversible adenylation of nicotinate mononucleotide (NaMN) to nicotinic acid adenine dinucleotide (NaAD). The sequence is that of Probable nicotinate-nucleotide adenylyltransferase from Neisseria meningitidis serogroup C / serotype 2a (strain ATCC 700532 / DSM 15464 / FAM18).